Reading from the N-terminus, the 747-residue chain is DNA-directed RNA polymerase subunit beta' (747 aa).

Zn(2+) contacts are provided by Cys70, Cys72, Cys97, and Cys100. Mg(2+) is bound by residues Asp502, Asp504, and Asp506.

The protein belongs to the RNA polymerase beta' chain family. RpoC1 subfamily. As to quaternary structure, in plastids the minimal PEP RNA polymerase catalytic core is composed of four subunits: alpha, beta, beta', and beta''. When a (nuclear-encoded) sigma factor is associated with the core the holoenzyme is formed, which can initiate transcription. It depends on Mg(2+) as a cofactor. Zn(2+) serves as cofactor.

Its subcellular location is the plastid. It is found in the chloroplast. It catalyses the reaction RNA(n) + a ribonucleoside 5'-triphosphate = RNA(n+1) + diphosphate. Functionally, DNA-dependent RNA polymerase catalyzes the transcription of DNA into RNA using the four ribonucleoside triphosphates as substrates. This chain is DNA-directed RNA polymerase subunit beta', found in Gnetum parvifolium (Small-leaved jointfir).